We begin with the raw amino-acid sequence, 161 residues long: Globin CTT-VIIB-8 (161 aa).

An N-terminal signal peptide occupies residues 1–16 (MKFFAVLALCIVGAIA). Residues 18 to 161 (PLTADEASLV…NTYAIVVPRL (144 aa)) enclose the Globin domain. The heme b site is built by H76 and H111.

It belongs to the globin family. Homodimer.

This is Globin CTT-VIIB-8 (CTT-7B8) from Chironomus thummi thummi (Midge).